Consider the following 648-residue polypeptide: RAF proto-oncogene serine/threonine-protein kinase (648 aa).

S29 carries the phosphoserine; by MAPK1 modification. S43 bears the Phosphoserine mark. In terms of domain architecture, RBD spans 56 to 131 (NTIRVFLPNK…IGEELQVDFL (76 aa)). The Phorbol-ester/DAG-type zinc-finger motif lies at 138-184 (THNFARKTFLKLAFCDICQKFLLNGFRCQTCGYKFHEHCSTKVPTMC). Residues H139, C152, C155, C165, C168, H173, C176, and C184 each contribute to the Zn(2+) site. Residues 217–335 (MRESVSRMPA…EKNKIRPRGQ (119 aa)) form a disordered region. S233 carries the phosphoserine; by PKA modification. Residues 239–271 (TFNTSSPSSEGSLSQRQRSTSTPNVHMVSTTLP) show a composition bias toward polar residues. A phosphoserine mark is found at S252 and S259. Residue T268 is modified to Phosphothreonine; by autocatalysis. T269 bears the Phosphothreonine; by PKA mark. Over residues 275–285 (RMIEDAIRSHS) the composition is skewed to basic and acidic residues. Positions 286 to 301 (ESASPSALSSSPNNLS) are enriched in low complexity. Phosphoserine; by MAPK1 occurs at positions 289, 296, and 301. Residues 331 to 349 (RPRGQRDSSYYWEIEASEV) are interaction with PEBP1/RKIP. S338 is modified (phosphoserine; by PAK1, PAK2, PAK3 and PAK5). S339 is subject to Phosphoserine; by PAK1, PAK2 and PAK3. Phosphotyrosine; by SRC is present on residues Y340 and Y341. In terms of domain architecture, Protein kinase spans 349 to 609 (VMLSTRIGSG…PQILSSIELL (261 aa)). ATP is bound by residues 355-363 (IGSGSFGTV) and K375. D468 serves as the catalytic Proton acceptor. At S471 the chain carries Phosphoserine. T491 bears the Phosphothreonine mark. Position 494 is a phosphoserine (S494). 2 positions are modified to phosphoserine; by PKC: S497 and S499. R563 carries the post-translational modification Symmetric dimethylarginine; by PRMT5. At S621 the chain carries Phosphoserine. At S642 the chain carries Phosphoserine; by MAPK1.

This sequence belongs to the protein kinase superfamily. TKL Ser/Thr protein kinase family. RAF subfamily. Monomer. Homodimer. Heterodimerizes with BRAF and this heterodimer possesses a highly increased kinase activity compared to the respective homodimers or monomers. Heterodimerization is mitogen-regulated and enhanced by 14-3-3 proteins. MAPK1/ERK2 activation can induce a negative feedback that promotes the dissociation of the heterodimer. Forms a multiprotein complex with Ras (M-Ras/MRAS), SHOC2 and protein phosphatase 1 (PPP1CA, PPP1CB and PPP1CC). Interacts with LZTR1. Interacts with Ras proteins; the interaction is antagonized by RIN1. Weakly interacts with RIT1. Interacts with STK3/MST2; the interaction inhibits its pro-apoptotic activity. Interacts (when phosphorylated at Ser-259) with YWHAZ (unphosphorylated at 'Thr-232'). Interacts with MAP3K5/ASF1 (via N-terminus) and this interaction inhibits the proapoptotic function of MAP3K5/ASK1. Interacts with PAK1 (via kinase domain). The phosphorylated form interacts with PIN1. The Ser-338 and Ser-339 phosphorylated form (by PAK1) interacts with BCL2. Interacts with PEBP1/RKIP and this interaction is enhanced if RAF1 is phosphorylated on residues Ser-338, Ser-339, Tyr-340 and Tyr-341. Interacts with ADCY2, ADCY5, ADCY6, DGKH, RCAN1/DSCR1, PPP1R12A, PKB/AKT1, PPP2CA, PPP2R1B, SPRY2, SPRY4, CNKSR1/CNK1, KSR2 and PHB/prohibitin. Interacts with ROCK2. Interacts (via N-terminus) with RGS14 (via RBD domains); the interaction mediates the formation of a ternary complex with BRAF, a ternary complex inhibited by GNAI1. Probably forms a complex composed of chaperones HSP90 and HSP70, co-chaperones CDC37, PPP5C, TSC1 and client protein TSC2, CDK4, AKT, RAF1 and NR3C1; this complex does not contain co-chaperones STIP1/HOP and PTGES3/p23. Interacts with MAP2K1/MEK1 and MAP2K2/MEK2. In its active form, interacts with PRMT5. Interacts with FAM83B; displaces 14-3-3 proteins from RAF1 and activates RAF1. Interacts with PDE8A; the interaction promotes RAF1 activity. Interacts with MFHAS1. Interacts with GLS. Interacts with YWHAZ. Interacts with NEK10 and MAP2K1; the interaction is direct with NEK10 and required for ERK1/2-signaling pathway activation in response to UV irradiation. Requires Zn(2+) as cofactor. Phosphorylation at Thr-269, Ser-338, Tyr-341, Thr-491 and Ser-494 results in its activation. Phosphorylation at Ser-29, Ser-43, Ser-289, Ser-296, Ser-301 and Ser-642 by MAPK1/ERK2 results in its inactivation. Phosphorylation at Ser-259 induces the interaction with YWHAZ and inactivates kinase activity. Dephosphorylation of Ser-259 by the SHOC2-MRAS-PP1c (SMP) complex consisting of SHOC2, GTP-bound M-Ras/MRAS and the catalytic subunit of protein phosphatase 1 (PPP1CA, PPP1CB or PPP1CC); this relieves inactivation and stimulates kinase activity. Phosphorylation at Ser-338 by PAK1 and PAK5 and Ser-339 by PAK1 is required for its mitochondrial localization. Phosphorylation at Ser-621 in response to growth factor treatment stabilizes the protein, possibly by preventing proteasomal degradation. Phosphorylation at Ser-289, Ser-296, Ser-301, Ser-338 and Ser-621 are somehow linked to the methylation potential of cells. Treatment of cells with HGF in the presence of the methylation inhibitor 5'-methylthioadenosine (MTA) results in increased phosphorylation at Ser-338 and Ser-621 and decreased phosphorylation at Ser-296, Ser-301 and Ser-338. Dephosphorylation at Ser-338 by PPP5C results in a decreased of activity. Post-translationally, methylated in response to EGF treatment. This modification leads to destabilization of the protein, possibly through proteasomal degradation.

It localises to the cytoplasm. It is found in the cell membrane. The protein localises to the mitochondrion. The protein resides in the nucleus. It catalyses the reaction L-seryl-[protein] + ATP = O-phospho-L-seryl-[protein] + ADP + H(+). The catalysed reaction is L-threonyl-[protein] + ATP = O-phospho-L-threonyl-[protein] + ADP + H(+). Its activity is regulated as follows. Regulation is a highly complex process involving membrane recruitment, protein-protein interactions, dimerization, and phosphorylation/dephosphorylation events. Ras-GTP recruits RAF1 to the membrane, thereby promoting its activation. The inactive conformation of RAF1 is maintained by autoinhibitory interactions occurring between the N-terminal regulatory and the C-terminal catalytic domains and by the binding of a 14-3-3 protein that contacts two phosphorylation sites, Ser-259 and Ser-621. Upon mitogenic stimulation, Ras and PPP2R1A cooperate to release autoinhibition and the subsequent phosphorylation of activating sites: Ser-338, Tyr-341, Thr-491, and Ser-494, yields a fully active kinase. Through a negative feedback mechanism involving MAPK1/ERK2, RAF1 is phosphorylated on Ser-29, Ser-43, Ser-289, Ser-296, Ser-301 and Ser-642 by MAPK1/ERK2, which yields an inactive, desensitized kinase. The signaling-competent conformation of RAF1 is finally re-established by the coordinated action of PIN1, a prolyl isomerase that converts pSer and pThr residues from the cis to the trans conformation, which is preferentially recognized and dephosphorylated by PPP2R1A. Activated by homodimerization and heterodimerization (with BRAF). Also regulated through association with other proteins such as KSR2, CNKSR1/CNK1, PEBP1/RKIP, PHB/prohibitin and SPRY4. PEBP1/RKIP acts by dissociating RAF1 from its substrates MAP2K1/MEK1 and MAP2K2/MEK2. PHB/prohibitin facilitates the displacement of 14-3-3 from RAF1 by activated Ras, thereby promoting cell membrane localization and phosphorylation of RAF1 at the activating Ser-338. SPRY4 inhibits Ras-independent, but not Ras-dependent, activation of RAF1. CNKSR1/CNK1 regulates Src-mediated RAF1 activation. Serine/threonine-protein kinase that acts as a regulatory link between the membrane-associated Ras GTPases and the MAPK/ERK cascade, and this critical regulatory link functions as a switch determining cell fate decisions including proliferation, differentiation, apoptosis, survival and oncogenic transformation. RAF1 activation initiates a mitogen-activated protein kinase (MAPK) cascade that comprises a sequential phosphorylation of the dual-specific MAPK kinases (MAP2K1/MEK1 and MAP2K2/MEK2) and the extracellular signal-regulated kinases (MAPK3/ERK1 and MAPK1/ERK2). The phosphorylated form of RAF1 (on residues Ser-338 and Ser-339, by PAK1) phosphorylates BAD/Bcl2-antagonist of cell death at 'Ser-75'. Phosphorylates adenylyl cyclases: ADCY2, ADCY5 and ADCY6, resulting in their activation. Phosphorylates PPP1R12A resulting in inhibition of the phosphatase activity. Can promote NF-kB activation and inhibit signal transducers involved in motility (ROCK2), apoptosis (MAP3K5/ASK1 and STK3/MST2), proliferation and angiogenesis (RB1). Can protect cells from apoptosis also by translocating to the mitochondria where it binds BCL2 and displaces BAD/Bcl2-antagonist of cell death. Regulates Rho signaling and migration, and is required for normal wound healing. Plays a role in the oncogenic transformation of epithelial cells via repression of the TJ protein, occludin (OCLN) by inducing the up-regulation of a transcriptional repressor SNAI2/SLUG, which induces down-regulation of OCLN. Restricts caspase activation in response to selected stimuli, notably Fas stimulation, pathogen-mediated macrophage apoptosis, and erythroid differentiation. Phosphorylates TNNT2/cardiac muscle troponin T. The chain is RAF proto-oncogene serine/threonine-protein kinase (Raf1) from Rattus norvegicus (Rat).